Reading from the N-terminus, the 706-residue chain is K(+)-insensitive pyrophosphate-energized proton pump (706 aa).

A run of 5 helical transmembrane segments spans residues 1-21 (MTALWLIVLCGVLSVVYAIWA), 62-82 (IVIFVLLVYFLGFYVAIGFAI), 83-103 (GAILSGAAGFIGMNVSVRANV), 128-148 (GMLVAGLALLGVTLYFGFLVY), and 164-184 (VALGFGASLISIFARLGGGIF). Lys186 contacts substrate. Mg(2+) contacts are provided by Asp189, Asp193, Asn216, and Asp219. Helical transmembrane passes span 231–251 (LFETYAVTAVATMVLAAIFFA), 261–281 (TLPLAIGGICIITSIIGTFFV), 298–318 (IATGVLSLIGIAVVIYTLIGF), 328–348 (GMSLFECGVVGLIVTALIIWI), 376–398 (IQGLAISMEATALPAIVIIAGIL), and 412–432 (ATATMLALAGMIVALDAFGPV). Position 434 (Asp434) interacts with Mg(2+). 4 consecutive transmembrane segments (helical) span residues 465-485 (AVTKGYAIGSAGLGALVLFAA), 516-536 (YVVVGLLFGGLLPYLFGAMGM), 585-605 (IIPSLLPVLSPIVVYFLIYAI), and 616-636 (AFSAVGAMLLGVIVTGLFVAI). The Ca(2+) site is built by Asp646, Asp672, and Asp676. Substrate is bound at residue Lys679. Residues 685–705 (AVNPMIKITNIVALLLLAILA) form a helical membrane-spanning segment.

The protein belongs to the H(+)-translocating pyrophosphatase (TC 3.A.10) family. K(+)-insensitive subfamily. In terms of assembly, homodimer. Mg(2+) serves as cofactor.

The protein localises to the cell inner membrane. It catalyses the reaction diphosphate + H2O + H(+)(in) = 2 phosphate + 2 H(+)(out). In terms of biological role, proton pump that utilizes the energy of pyrophosphate hydrolysis as the driving force for proton movement across the membrane. Generates a proton motive force. This Bradyrhizobium diazoefficiens (strain JCM 10833 / BCRC 13528 / IAM 13628 / NBRC 14792 / USDA 110) protein is K(+)-insensitive pyrophosphate-energized proton pump.